A 218-amino-acid chain; its full sequence is Probable transaldolase (218 aa).

Catalysis depends on K83, which acts as the Schiff-base intermediate with substrate.

It belongs to the transaldolase family. Type 3B subfamily.

It is found in the cytoplasm. It catalyses the reaction D-sedoheptulose 7-phosphate + D-glyceraldehyde 3-phosphate = D-erythrose 4-phosphate + beta-D-fructose 6-phosphate. Its pathway is carbohydrate degradation; pentose phosphate pathway; D-glyceraldehyde 3-phosphate and beta-D-fructose 6-phosphate from D-ribose 5-phosphate and D-xylulose 5-phosphate (non-oxidative stage): step 2/3. Its function is as follows. Transaldolase is important for the balance of metabolites in the pentose-phosphate pathway. The polypeptide is Probable transaldolase (tal) (Mesorhizobium japonicum (strain LMG 29417 / CECT 9101 / MAFF 303099) (Mesorhizobium loti (strain MAFF 303099))).